A 981-amino-acid polypeptide reads, in one-letter code: Ubiquitin carboxyl-terminal hydrolase 15 (981 aa).

N-acetylalanine is present on Ala-2. The tract at residues 2–223 is mediates interaction with SART3; that stretch reads AEGGAADLDT…KNEDGTWPRG (222 aa). Residues 7–118 form the DUSP domain; the sequence is ADLDTQRSDI…GQEPIARKVV (112 aa). A disordered region spans residues 216 to 237; it reads EDGTWPRGPSTPKSPGASNFST. The residue at position 226 (Thr-226) is a Phosphothreonine. A compositionally biased stretch (polar residues) spans 226 to 237; it reads TPKSPGASNFST. Residues Ser-229 and Ser-242 each carry the phosphoserine modification. The USP domain maps to 289 to 933; the sequence is CGLSNLGNTC…AAYVLFYQRQ (645 aa). Residue Cys-298 is the Nucleophile of the active site. Thr-602 carries the post-translational modification Phosphothreonine. Positions 629-694 are disordered; it reads GSLHCCKDQN…GGDNDSENGL (66 aa). Over residues 656–673 the composition is skewed to acidic residues; that stretch reads METDEPDDESSQDQELPS. The Proton acceptor role is filled by His-891. The segment at 952–981 is disordered; the sequence is SAATGIPLESDEDSNDNDNDIENENCMHTN. Residues 960–974 show a composition bias toward acidic residues; the sequence is ESDEDSNDNDNDIEN. Ser-961 and Ser-965 each carry phosphoserine.

Belongs to the peptidase C19 family. As to quaternary structure, a homodimer structure has been reported; however it is unclear whether the protein form a homodimer in vivo. Identified in a complex with the COP9 signalosome complex (CSN). Interacts with SMAD1, SMAD2 and SMAD3; the interaction is direct. Forms a complex with SMURF2 and SMAD7. Interacts with TGFBR1. Interacts with SART3; the interaction is direct. May interact with RNF20 and RNF40. May interact with PRKN. Interacts with INCA1. (Microbial infection) Interacts with human papillomavirus type 16 protein E6. Post-translationally, phosphorylated. Phosphorylation protects against ubiquitination and subsequent degradation by the proteasome. In terms of processing, ubiquitinated, leading to degradation by the proteasome. Expressed in skeletal muscle, kidney, heart, placenta, liver, thymus, lung, and ovary, with little or no expression in other tissues.

It is found in the cytoplasm. The protein resides in the nucleus. Its subcellular location is the mitochondrion. It catalyses the reaction Thiol-dependent hydrolysis of ester, thioester, amide, peptide and isopeptide bonds formed by the C-terminal Gly of ubiquitin (a 76-residue protein attached to proteins as an intracellular targeting signal).. Functionally, hydrolase that removes conjugated ubiquitin from target proteins and regulates various pathways such as the TGF-beta receptor signaling, NF-kappa-B and RNF41/NRDP1-PRKN pathways. Acts as a key regulator of TGF-beta receptor signaling pathway, but the precise mechanism is still unclear: according to a report, acts by promoting deubiquitination of monoubiquitinated R-SMADs (SMAD1, SMAD2 and/or SMAD3), thereby alleviating inhibition of R-SMADs and promoting activation of TGF-beta target genes. According to another reports, regulates the TGF-beta receptor signaling pathway by mediating deubiquitination and stabilization of TGFBR1, leading to an enhanced TGF-beta signal. Able to mediate deubiquitination of monoubiquitinated substrates, 'Lys-27'-, 'Lys-48'- and 'Lys-63'-linked polyubiquitin chains. May also regulate gene expression and/or DNA repair through the deubiquitination of histone H2B. Acts as an inhibitor of mitophagy by counteracting the action of parkin (PRKN): hydrolyzes cleavage of 'Lys-48'- and 'Lys-63'-linked polyubiquitin chains attached by parkin on target proteins such as MFN2, thereby reducing parkin's ability to drive mitophagy. Acts as an associated component of COP9 signalosome complex (CSN) and regulates different pathways via this association: regulates NF-kappa-B by mediating deubiquitination of NFKBIA and deubiquitinates substrates bound to VCP. Involved in endosome organization by mediating deubiquitination of SQSTM1: ubiquitinated SQSTM1 forms a molecular bridge that restrains cognate vesicles in the perinuclear region and its deubiquitination releases target vesicles for fast transport into the cell periphery. Acts as a negative regulator of antifungal immunity by mediating 'Lys-27'-linked deubiquitination of CARD9, thereby inactivating CARD9. (Microbial infection) Protects APC and human papillomavirus type 16 protein E6 against degradation via the ubiquitin proteasome pathway. The protein is Ubiquitin carboxyl-terminal hydrolase 15 of Homo sapiens (Human).